The sequence spans 277 residues: Undecaprenyl-diphosphatase (277 aa).

Helical transmembrane passes span Ile-3 to Pro-23, Ala-44 to Trp-64, Gln-82 to Gly-102, Leu-109 to Ala-129, Ala-188 to Leu-208, Ala-218 to Ile-238, and Ser-249 to Trp-269.

The protein belongs to the UppP family.

Its subcellular location is the cell inner membrane. It carries out the reaction di-trans,octa-cis-undecaprenyl diphosphate + H2O = di-trans,octa-cis-undecaprenyl phosphate + phosphate + H(+). Its function is as follows. Catalyzes the dephosphorylation of undecaprenyl diphosphate (UPP). Confers resistance to bacitracin. The protein is Undecaprenyl-diphosphatase of Polaromonas sp. (strain JS666 / ATCC BAA-500).